Here is a 493-residue protein sequence, read N- to C-terminus: 5'-3' exonuclease PLD3 (493 aa).

Topologically, residues 1–37 (MSSKVEYKPIQPHEEAENHFLQHELHKVKARKYYRCA) are cytoplasmic. The chain crosses the membrane as a helical; Signal-anchor for type II membrane protein span at residues 38 to 58 (LVVAIIITLVFCILASQLLLF). Topologically, residues 59-493 (PFLSITSQTT…LSSWKEKCIF (435 aa)) are lumenal. The N-linked (GlcNAc...) asparagine glycan is linked to Asn99. A PLD phosphodiesterase 1 domain is found at 197–224 (TDGILHTKFWVVDNEHFYIGSANMDWRS). Active-site residues include His202, Lys204, and Asp209. N-linked (GlcNAc...) asparagine glycosylation is found at Asn237, Asn259, Asn269, Asn285, and Asn388. Residues 412 to 438 (YARVNHNKYMVTDRVAYIGTSNWSGDY) form the PLD phosphodiesterase 2 domain. Residues His417, Lys419, and Asp424 contribute to the active site. N-linked (GlcNAc...) asparagine glycosylation is found at Asn433, Asn450, and Asn476.

Belongs to the phospholipase D family. In terms of processing, N-glycosylated. Proteolytically processed to a soluble form that is stable within endosomes and lysosomes. During transport through the secretory pathway becomes proteolysed by cysteine proteases, thereby releasing a stable soluble lysosomal lumenal polypeptide, whereas the transmembrane-bound fragment is rapidly degraded. Its transport route to lysosomes involves ubiquitination and the ESCRT complex. Post-translationally, ubiquitinated. Ubiquitination mediates sorting into lysosomes.

The protein localises to the endoplasmic reticulum membrane. It is found in the lysosome lumen. The protein resides in the early endosome membrane. Its subcellular location is the late endosome membrane. It localises to the golgi apparatus membrane. The protein localises to the endosome membrane. It catalyses the reaction Exonucleolytic cleavage in the 5'- to 3'-direction to yield nucleoside 3'-phosphates.. Functionally, 5'-&gt;3' DNA exonuclease which digests single-stranded DNA (ssDNA). Regulates inflammatory cytokine responses via the degradation of nucleic acids, by reducing the concentration of ssDNA able to stimulate TLR9, a nucleotide-sensing receptor in collaboration with PLD4. May be important in myotube formation. Plays a role in lysosomal homeostasis. Involved in the regulation of endosomal protein sorting. The protein is 5'-3' exonuclease PLD3 (pld3) of Xenopus laevis (African clawed frog).